Reading from the N-terminus, the 379-residue chain is Protein OSCP1 (379 aa).

Predominantly expressed in testis.

The protein resides in the basal cell membrane. Functionally, may be involved in drug clearance in the placenta. This Mus musculus (Mouse) protein is Protein OSCP1 (Oscp1).